The sequence spans 478 residues: Zinc finger protein 410 (478 aa).

Disordered stretches follow at residues 84-113 and 187-214; these read PDGE…LQDL and NAKT…PLPQ. A compositionally biased stretch (polar residues) spans 103–113; the sequence is TPESPSLLQDL. 5 consecutive C2H2-type zinc fingers follow at residues 219 to 243, 249 to 273, 279 to 303, 309 to 333, and 339 to 362; these read LKCT…LKTH, FICP…MRTH, FMCH…RRIH, FLCE…LVVH, and HQCQ…RKHH. Cys-221, Cys-226, His-239, His-243, Cys-251, Cys-256, His-269, His-273, Cys-281, Cys-286, His-299, His-303, Cys-311, Cys-316, His-329, His-333, Cys-341, Cys-344, His-357, and His-361 together coordinate Zn(2+).

Interacts with CDKN2A/p14ARF. In terms of processing, O-glycosylated. O-GlcNAcylation may occur in response to increasing glucose levels and affect transcription factor activity. Sumoylated. Sumoylation increases its half-life, possibly by blocking ubiquitin-mediated degradation.

It localises to the nucleus. Its subcellular location is the chromosome. Its function is as follows. Transcription factor that binds to the sequence motif 5'-CATCCCATAATA-3', and is specifically required to silence expression of fetal hemoglobin in adult erythroid cells. Prevents expression of fetal hemoglobin genes HBG1 and HBG2 through CHD4: acts as a direct transcriptional activator of CHD4, a central component of the NuRD complex that represses transcription of fetal hemoglobin genes HBG1 and HBG2 in erythroid cells. May also activate transcription of matrix-remodeling genes such as MMP1 during fibroblast senescence. May activate transcription of the gap junction gene GJC1, perhaps in response to increasing glucose. However, recent studies suggest that ZNF410 is dedicated to regulate expression of a single gene: CHD4. In Mus musculus (Mouse), this protein is Zinc finger protein 410.